We begin with the raw amino-acid sequence, 1277 residues long: Myosin-1 (1277 aa).

A compositionally biased stretch (basic residues) spans 1–13 (MAPSKKAGKKVTP). Positions 1–27 (MAPSKKAGKKVTPKKAAGNNAKSKVAK) are disordered. In terms of domain architecture, Myosin motor spans 39–718 (VGVTDMTLLT…TLFALETMRD (680 aa)). 132–139 (GESGAGKT) is a binding site for ATP. Position 360 is a phosphoserine (Ser-360). The segment at 407–489 (IIGILDIFGF…PGIFAALNDA (83 aa)) is actin-binding. The segment at 567-587 (LFPDRPDPNSKKRPPTASDRI) is disordered. 2 IQ domains span residues 722–742 (HNMA…KHEC) and 743–768 (ARRI…YGHQ). In terms of domain architecture, TH1 spans 776–965 (RRRFSLLSYR…TVHVPSGEPA (190 aa)). Disordered stretches follow at residues 952-1072 (YKSH…AEPE) and 1129-1259 (PKAA…GPGQ). Residues 1015 to 1056 (PAVATPSVVSTPAAAAVVSKPKPAASTPAAVRAPAVTPAARS) show a composition bias toward low complexity. Pro residues predominate over residues 1057-1068 (VPPPPPPPPPAR). The region spanning 1071–1129 (PEKEMYRAKFDFQGQEGEMSLTKDDEVELIEKDENGWWLVKKDGVEAWAPYNYLERIAP) is the SH3 domain. The segment covering 1132 to 1142 (APAPPPPPARP) has biased composition (pro residues). 2 stretches are compositionally biased toward polar residues: residues 1145 to 1159 (TSTV…TTAD) and 1185 to 1197 (AATT…SSRP). The span at 1204–1224 (VPPPVAAKPKPPVVAPKPGVP) shows a compositional bias: pro residues. A compositionally biased stretch (low complexity) spans 1226 to 1240 (PGGKPALPTTARPAP). The segment covering 1241-1258 (SGGGAAAGRLGGGGGGPG) has biased composition (gly residues).

It belongs to the TRAFAC class myosin-kinesin ATPase superfamily. Myosin family. Post-translationally, phosphorylation of the TEDS site (Ser-360) is required for the polarization of the actin cytoskeleton. Phosphorylation probably activates the myosin-I ATPase activity.

It localises to the cytoplasm. The protein localises to the cytoskeleton. Its subcellular location is the actin patch. Functionally, type-I myosin implicated in the organization of the actin cytoskeleton. Required for proper actin cytoskeleton polarization. At the cell cortex, assembles in patch-like structures together with proteins from the actin-polymerizing machinery and promotes actin assembly. Functions as actin nucleation-promoting factor (NPF) for the Arp2/3 complex. The protein is Myosin-1 (MYO1) of Coprinopsis cinerea (strain Okayama-7 / 130 / ATCC MYA-4618 / FGSC 9003) (Inky cap fungus).